A 200-amino-acid polypeptide reads, in one-letter code: Recombination protein RecR (200 aa).

The C4-type zinc-finger motif lies at 57-72 (CDSCQNFSDTEICQIC). A Toprim domain is found at 80–175 (GTLCVVESPS…LITRLAHGIP (96 aa)).

The protein belongs to the RecR family.

Functionally, may play a role in DNA repair. It seems to be involved in an RecBC-independent recombinational process of DNA repair. It may act with RecF and RecO. The protein is Recombination protein RecR of Marinobacter nauticus (strain ATCC 700491 / DSM 11845 / VT8) (Marinobacter aquaeolei).